The sequence spans 353 residues: DNA-directed RNA polymerase subunit alpha (353 aa).

The tract at residues 1 to 234 is alpha N-terminal domain (alpha-NTD); the sequence is MVREKVTVST…DLFIPFLHTE (234 aa). Residues 267–353 are alpha C-terminal domain (alpha-CTD); that stretch reads KRALKSIFID…LAQLIDSKSG (87 aa).

Belongs to the RNA polymerase alpha chain family. In plastids the minimal PEP RNA polymerase catalytic core is composed of four subunits: alpha, beta, beta', and beta''. When a (nuclear-encoded) sigma factor is associated with the core the holoenzyme is formed, which can initiate transcription.

The protein resides in the plastid. The protein localises to the chloroplast. It catalyses the reaction RNA(n) + a ribonucleoside 5'-triphosphate = RNA(n+1) + diphosphate. DNA-dependent RNA polymerase catalyzes the transcription of DNA into RNA using the four ribonucleoside triphosphates as substrates. This chain is DNA-directed RNA polymerase subunit alpha, found in Daucus carota (Wild carrot).